The primary structure comprises 59 residues: Cecropin-A (59 aa).

Residues 1 to 23 form the signal peptide; the sequence is MNFTKLFLLIAMAVLLLTGQSEA. A propeptide spans 58–59 (removed in mature form (AeaeCec2)); that stretch reads GK.

In terms of tissue distribution, hemolymph (at protein level).

The protein resides in the secreted. In terms of biological role, antimicrobial peptide. Antibacterial activity against Gram-negative bacteria E.coli D22 and D31, E.carotovora, K.pneumoniae, P.aeruginosa, S.typhimurium, E.cloacae B12 and X.campestris and Gram-positive bacteria A.viridans, M.luteus, B.megaterium and S.pyogenes. Possesses antifungal activity against F.oxysporum, F.culmorum and N.crassa, C.albicans, C.neoformans and S.cerevisiae. No activity against Gram-negative S.marcescens Db11, Gram-positive B.cereus, B.subtilis, B.thuringiensis, S.aureus and L.monocytogenes, the fungi A.fumigatus and B.bassiana and C.glabrata. Partially neutralizes lipopolysaccharides (LPS). Exhibits anti-inflammatory properties: inhibits LPS-induced iNOS/NOS2 transcription, nitric oxide (NO) and pro-inflammatory cytokine production in mouse macrophages and human peripheral blood mononuclear cells (PBMCs); inhibits LPS-induced activation of MAPK and NF-kappa-B signaling pathways in mouse macrophages. This is Cecropin-A (CECA) from Aedes aegypti (Yellowfever mosquito).